Reading from the N-terminus, the 120-residue chain is Large ribosomal subunit protein uL18 (120 aa).

Residues 1–10 (MSTPRKEQTQ) are compositionally biased toward basic and acidic residues. Residues 1-25 (MSTPRKEQTQKRHRRLRRHLEGTPE) form a disordered region.

Belongs to the universal ribosomal protein uL18 family. Part of the 50S ribosomal subunit; part of the 5S rRNA/L5/L18/L25 subcomplex. Contacts the 5S and 23S rRNAs.

Its function is as follows. This is one of the proteins that bind and probably mediate the attachment of the 5S RNA into the large ribosomal subunit, where it forms part of the central protuberance. The protein is Large ribosomal subunit protein uL18 of Synechococcus sp. (strain RCC307).